The sequence spans 89 residues: Small ribosomal subunit protein uS17 (89 aa).

The protein belongs to the universal ribosomal protein uS17 family. In terms of assembly, part of the 30S ribosomal subunit.

In terms of biological role, one of the primary rRNA binding proteins, it binds specifically to the 5'-end of 16S ribosomal RNA. This Coxiella burnetii (strain RSA 493 / Nine Mile phase I) protein is Small ribosomal subunit protein uS17.